A 311-amino-acid chain; its full sequence is Methionyl-tRNA formyltransferase (311 aa).

Position 109–112 (109–112 (SLLP)) interacts with (6S)-5,6,7,8-tetrahydrofolate.

Belongs to the Fmt family.

The enzyme catalyses L-methionyl-tRNA(fMet) + (6R)-10-formyltetrahydrofolate = N-formyl-L-methionyl-tRNA(fMet) + (6S)-5,6,7,8-tetrahydrofolate + H(+). Functionally, attaches a formyl group to the free amino group of methionyl-tRNA(fMet). The formyl group appears to play a dual role in the initiator identity of N-formylmethionyl-tRNA by promoting its recognition by IF2 and preventing the misappropriation of this tRNA by the elongation apparatus. The chain is Methionyl-tRNA formyltransferase from Moorella thermoacetica (strain ATCC 39073 / JCM 9320).